A 317-amino-acid chain; its full sequence is Malate dehydrogenase (317 aa).

Residues 7–13 and Asp-34 each bind NAD(+); that span reads GAAGGIG. Positions 81 and 87 each coordinate substrate. Residues Asn-94 and 117–119 contribute to the NAD(+) site; that span reads VTN. Substrate contacts are provided by Asn-119 and Arg-153. His-177 functions as the Proton acceptor in the catalytic mechanism. Met-231 lines the NAD(+) pocket.

Belongs to the LDH/MDH superfamily. MDH type 1 family. In terms of assembly, homodimer.

The enzyme catalyses (S)-malate + NAD(+) = oxaloacetate + NADH + H(+). In terms of biological role, catalyzes the reversible oxidation of malate to oxaloacetate. This Actinobacillus pleuropneumoniae serotype 5b (strain L20) protein is Malate dehydrogenase.